The sequence spans 284 residues: Pantothenate synthetase (284 aa).

Position 30-37 (30-37) interacts with ATP; sequence MGNLHEGH. The active-site Proton donor is histidine 37. Glutamine 61 is a binding site for (R)-pantoate. Glutamine 61 serves as a coordination point for beta-alanine. An ATP-binding site is contributed by 149–152; it reads GEKD. Glutamine 155 provides a ligand contact to (R)-pantoate. Residues valine 178 and 186–189 contribute to the ATP site; that span reads LSSR.

Belongs to the pantothenate synthetase family. Homodimer.

The protein localises to the cytoplasm. It carries out the reaction (R)-pantoate + beta-alanine + ATP = (R)-pantothenate + AMP + diphosphate + H(+). It participates in cofactor biosynthesis; (R)-pantothenate biosynthesis; (R)-pantothenate from (R)-pantoate and beta-alanine: step 1/1. Functionally, catalyzes the condensation of pantoate with beta-alanine in an ATP-dependent reaction via a pantoyl-adenylate intermediate. The sequence is that of Pantothenate synthetase from Yersinia pestis bv. Antiqua (strain Antiqua).